A 156-amino-acid polypeptide reads, in one-letter code: Probable inactive ribonuclease-like protein 13 (156 aa).

A signal peptide spans 1-20 (MAPAVTRLLFLQLVLGPTLV). Asn126 carries N-linked (GlcNAc...) asparagine glycosylation.

Belongs to the pancreatic ribonuclease family.

The protein localises to the secreted. Its function is as follows. Does not exhibit any ribonuclease activity. The chain is Probable inactive ribonuclease-like protein 13 (RNASE13) from Homo sapiens (Human).